A 63-amino-acid polypeptide reads, in one-letter code: Sperm protamine P1 (63 aa).

The interval 1-63 (MARYRRHSRS…RYSRRGRRRY (63 aa)) is disordered.

It belongs to the protamine P1 family. In terms of tissue distribution, testis.

Its subcellular location is the nucleus. The protein localises to the chromosome. Its function is as follows. Protamines substitute for histones in the chromatin of sperm during the haploid phase of spermatogenesis. They compact sperm DNA into a highly condensed, stable and inactive complex. The protein is Sperm protamine P1 (PRM1) of Pseudantechinus macdonnellensis (Fat-tailed marsupial mouse).